Consider the following 469-residue polypeptide: Alpha-2C adrenergic receptor (469 aa).

The disordered stretch occupies residues 1-29 (MDLQLTTNSTDSGDRGGSSNESLQRQPPS). The Extracellular portion of the chain corresponds to 1-36 (MDLQLTTNSTDSGDRGGSSNESLQRQPPSQYSPAEV). 2 N-linked (GlcNAc...) asparagine glycosylation sites follow: N8 and N20. Residues 37-62 (AGLAAVVSFLIVFTIVGNVLVVIAVL) traverse the membrane as a helical segment. At 63 to 73 (TSRALKAPQNL) the chain is on the cytoplasmic side. A helical transmembrane segment spans residues 74–99 (FQVSLASADILVATLVMPFSLANELM). Topologically, residues 100–109 (NYWYFGKVWC) are extracellular. C109 and C187 are joined by a disulfide. Residues 110-132 (VIYLALDVLFCTSSIVHLCAISL) form a helical membrane-spanning segment. At 133–154 (DRYWSVTQAVEYNLKRTPRRIK) the chain is on the cytoplasmic side. Residues 155-175 (GIIVTVWLISAVISFPPLISL) traverse the membrane as a helical segment. Residues 176-194 (YRDPEDDLYPQCELNDETW) are Extracellular-facing. A helical transmembrane segment spans residues 195–216 (YILSSCIGSFFAPCIIMVLVYV). Over 217 to 386 (RIYRVAKLRT…RKVTQAREKR (170 aa)) the chain is Cytoplasmic. Disordered regions lie at residues 232–261 (KRTVPEGSSQTENGLSRPPVGAGPSTAAAA) and 279–353 (HHHH…SRLS). Basic residues predominate over residues 279–296 (HHHHHLHHHHHHHHHQLR). The segment covering 301–310 (LEDIELEESS) has biased composition (acidic residues). Residues 331–353 (RGFSFSFSSTKGGQSAGAGSRLS) are compositionally biased toward low complexity. Residues 387–407 (FTFVLAVVMGVFVVCWFPFFF) traverse the membrane as a helical segment. The Extracellular segment spans residues 408 to 427 (TYSLYGICREACQVPETLFK). Residues 428-448 (FFFWIGYCNSSLNPVIYTIFN) form a helical membrane-spanning segment. The Cytoplasmic portion of the chain corresponds to 449-469 (QDFRRSFKHILFKKKKKTSLQ).

The protein belongs to the G-protein coupled receptor 1 family. Adrenergic receptor subfamily. ADRA2C sub-subfamily.

It localises to the cell membrane. Alpha-2 adrenergic receptors mediate the catecholamine-induced inhibition of adenylate cyclase through the action of G proteins. The polypeptide is Alpha-2C adrenergic receptor (ADRA2C) (Didelphis virginiana (North American opossum)).